The chain runs to 459 residues: GTPase Der (459 aa).

2 EngA-type G domains span residues 4-169 (PLVA…PEVT) and 179-355 (IAVS…AAHR). Residues 10-17 (GRPNVGKS), 57-61 (DTGGL), 120-123 (NKCE), 185-192 (GRPNVGKS), 232-236 (DTAGI), and 297-300 (NKWD) contribute to the GTP site. A KH-like domain is found at 356-441 (KRVPTAVVNE…PIRFLWRGKS (86 aa)).

This sequence belongs to the TRAFAC class TrmE-Era-EngA-EngB-Septin-like GTPase superfamily. EngA (Der) GTPase family. As to quaternary structure, associates with the 50S ribosomal subunit.

GTPase that plays an essential role in the late steps of ribosome biogenesis. The sequence is that of GTPase Der from Synechococcus sp. (strain JA-2-3B'a(2-13)) (Cyanobacteria bacterium Yellowstone B-Prime).